Consider the following 341-residue polypeptide: uncharacterized protein (341 aa).

Residues 315 to 337 (VAAWFSGIAGGTFLALKLVSLMM) form a helical membrane-spanning segment.

It is found in the cell membrane. This is an uncharacterized protein from Bacillus subtilis (strain 168).